A 220-amino-acid chain; its full sequence is tRNA (guanine-N(7)-)-methyltransferase (220 aa).

Positions 44, 69, 96, and 118 each coordinate S-adenosyl-L-methionine. Residue aspartate 118 is part of the active site. Position 122 (lysine 122) interacts with substrate. Residues 124 to 129 are interaction with RNA; that stretch reads RHEKRR. Residues aspartate 154 and 191–194 contribute to the substrate site; that span reads TEYE.

Belongs to the class I-like SAM-binding methyltransferase superfamily. TrmB family.

It carries out the reaction guanosine(46) in tRNA + S-adenosyl-L-methionine = N(7)-methylguanosine(46) in tRNA + S-adenosyl-L-homocysteine. Its pathway is tRNA modification; N(7)-methylguanine-tRNA biosynthesis. Its function is as follows. Catalyzes the formation of N(7)-methylguanine at position 46 (m7G46) in tRNA. This chain is tRNA (guanine-N(7)-)-methyltransferase, found in Geobacillus sp. (strain WCH70).